Consider the following 564-residue polypeptide: Dihydroxy-acid dehydratase (564 aa).

Asp-80 contacts Mg(2+). Cys-121 contacts [2Fe-2S] cluster. Positions 122 and 123 each coordinate Mg(2+). An N6-carboxylysine modification is found at Lys-123. Cys-194 lines the [2Fe-2S] cluster pocket. Glu-447 is a Mg(2+) binding site. Ser-473 serves as the catalytic Proton acceptor.

It belongs to the IlvD/Edd family. In terms of assembly, homodimer. The cofactor is [2Fe-2S] cluster. It depends on Mg(2+) as a cofactor.

It catalyses the reaction (2R)-2,3-dihydroxy-3-methylbutanoate = 3-methyl-2-oxobutanoate + H2O. It carries out the reaction (2R,3R)-2,3-dihydroxy-3-methylpentanoate = (S)-3-methyl-2-oxopentanoate + H2O. Its pathway is amino-acid biosynthesis; L-isoleucine biosynthesis; L-isoleucine from 2-oxobutanoate: step 3/4. It participates in amino-acid biosynthesis; L-valine biosynthesis; L-valine from pyruvate: step 3/4. In terms of biological role, functions in the biosynthesis of branched-chain amino acids. Catalyzes the dehydration of (2R,3R)-2,3-dihydroxy-3-methylpentanoate (2,3-dihydroxy-3-methylvalerate) into 2-oxo-3-methylpentanoate (2-oxo-3-methylvalerate) and of (2R)-2,3-dihydroxy-3-methylbutanoate (2,3-dihydroxyisovalerate) into 2-oxo-3-methylbutanoate (2-oxoisovalerate), the penultimate precursor to L-isoleucine and L-valine, respectively. The sequence is that of Dihydroxy-acid dehydratase from Listeria welshimeri serovar 6b (strain ATCC 35897 / DSM 20650 / CCUG 15529 / CIP 8149 / NCTC 11857 / SLCC 5334 / V8).